Consider the following 169-residue polypeptide: Transcription antitermination protein NusB (169 aa).

Residues 1–20 are disordered; the sequence is MAESSNKPFRGPVRANDRKA.

The protein belongs to the NusB family.

Its function is as follows. Involved in transcription antitermination. Required for transcription of ribosomal RNA (rRNA) genes. Binds specifically to the boxA antiterminator sequence of the ribosomal RNA (rrn) operons. In Bradyrhizobium sp. (strain BTAi1 / ATCC BAA-1182), this protein is Transcription antitermination protein NusB.